The sequence spans 132 residues: Transcription antitermination protein NusB (132 aa).

It belongs to the NusB family.

Involved in transcription antitermination. Required for transcription of ribosomal RNA (rRNA) genes. Binds specifically to the boxA antiterminator sequence of the ribosomal RNA (rrn) operons. The polypeptide is Transcription antitermination protein NusB (Campylobacter jejuni subsp. jejuni serotype O:6 (strain 81116 / NCTC 11828)).